A 382-amino-acid chain; its full sequence is Mating-type protein a-1 (382 aa).

A DNA-binding region (HMG box) is located at residues 116 to 184 (IPRPPNAYIL…RLLLENPDYR (69 aa)).

As to quaternary structure, binds in vitro to DNA containing a specific core sequence 5'-CTTTG-3'.

It is found in the nucleus. Its function is as follows. Mating type proteins are sequence specific DNA-binding proteins that act as master switches in yeast differentiation by controlling gene expression in a cell type-specific fashion. Transcriptional activator that induces the transcription of a-specific genes like mating factor mfa-1. Required for mating as an a-cell, blocking of heterokaryon formation (vegetative incompatibility) and for perithecium induction. The chain is Mating-type protein a-1 (mta-1) from Neurospora crassa.